The chain runs to 330 residues: tRNA-modifying protein YgfZ (330 aa).

2 residues coordinate folate: Trp-28 and Trp-192.

This sequence belongs to the tRNA-modifying YgfZ family.

Its subcellular location is the cytoplasm. Folate-binding protein involved in regulating the level of ATP-DnaA and in the modification of some tRNAs. It is probably a key factor in regulatory networks that act via tRNA modification, such as initiation of chromosomal replication. This Blochmanniella pennsylvanica (strain BPEN) protein is tRNA-modifying protein YgfZ.